A 668-amino-acid polypeptide reads, in one-letter code: Endoplasmic reticulum membrane-associated RNA degradation protein (668 aa).

The next 2 helical transmembrane spans lie at 378-398 and 575-595; these read LLAF…LSVF and VLSL…AVCG.

The protein resides in the endoplasmic reticulum membrane. May play a role in neuronal migration during embryonic development. This chain is Endoplasmic reticulum membrane-associated RNA degradation protein (ERMARD), found in Macaca fascicularis (Crab-eating macaque).